A 124-amino-acid polypeptide reads, in one-letter code: Small ribosomal subunit protein uS12 (124 aa).

Position 89 is a 3-methylthioaspartic acid (Asp89).

It belongs to the universal ribosomal protein uS12 family. Part of the 30S ribosomal subunit. Contacts proteins S8 and S17. May interact with IF1 in the 30S initiation complex.

Functionally, with S4 and S5 plays an important role in translational accuracy. Its function is as follows. Interacts with and stabilizes bases of the 16S rRNA that are involved in tRNA selection in the A site and with the mRNA backbone. Located at the interface of the 30S and 50S subunits, it traverses the body of the 30S subunit contacting proteins on the other side and probably holding the rRNA structure together. The combined cluster of proteins S8, S12 and S17 appears to hold together the shoulder and platform of the 30S subunit. The protein is Small ribosomal subunit protein uS12 of Thermoanaerobacter pseudethanolicus (strain ATCC 33223 / 39E) (Clostridium thermohydrosulfuricum).